Reading from the N-terminus, the 57-residue chain is MPHYVVVKSPMRRRRSPRRRSPRVCYSPRRVACSPRRRSPRRRSPRRRSPRRSIVVY.

The tract at residues 1-57 (MPHYVVVKSPMRRRRSPRRRSPRVCYSPRRVACSPRRRSPRRRSPRRRSPRRSIVVY) is disordered. Over residues 10–22 (PMRRRRSPRRRSP) the composition is skewed to basic residues. Low complexity predominate over residues 23 to 34 (RVCYSPRRVACS). Over residues 35–51 (PRRRSPRRRSPRRRSPR) the composition is skewed to basic residues.

This is an uncharacterized protein from Acheta domesticus (House cricket).